The chain runs to 344 residues: Biotin synthase (344 aa).

The region spanning 40-267 (AQVQVSTLLS…KSMVRLSAGR (228 aa)) is the Radical SAM core domain. Positions 55, 59, and 62 each coordinate [4Fe-4S] cluster. Positions 99, 130, 190, and 262 each coordinate [2Fe-2S] cluster.

Belongs to the radical SAM superfamily. Biotin synthase family. Homodimer. [4Fe-4S] cluster serves as cofactor. It depends on [2Fe-2S] cluster as a cofactor.

The enzyme catalyses (4R,5S)-dethiobiotin + (sulfur carrier)-SH + 2 reduced [2Fe-2S]-[ferredoxin] + 2 S-adenosyl-L-methionine = (sulfur carrier)-H + biotin + 2 5'-deoxyadenosine + 2 L-methionine + 2 oxidized [2Fe-2S]-[ferredoxin]. It participates in cofactor biosynthesis; biotin biosynthesis; biotin from 7,8-diaminononanoate: step 2/2. Functionally, catalyzes the conversion of dethiobiotin (DTB) to biotin by the insertion of a sulfur atom into dethiobiotin via a radical-based mechanism. This Xanthomonas axonopodis pv. citri (strain 306) protein is Biotin synthase.